A 291-amino-acid chain; its full sequence is Protein CMSS1 (291 aa).

The tract at residues 1–96 (MADDLGDEWW…KKTITDVLTS (96 aa)) is disordered. Residues 17–27 (DVPEVEEETEH) are compositionally biased toward acidic residues. The segment covering 58–79 (VKKECFITQERSEEKPDNESNK) has biased composition (basic and acidic residues).

It belongs to the CMS1 family.

The sequence is that of Protein CMSS1 (cmss1) from Danio rerio (Zebrafish).